Here is a 195-residue protein sequence, read N- to C-terminus: Probable GTP-binding protein EngB (195 aa).

The EngB-type G domain maps to 24–195 (DIPEIALAGR…AAWDAILSKI (172 aa)). GTP contacts are provided by residues 32 to 39 (GRSNVGKS), 59 to 63 (GKTQL), 77 to 80 (DVPG), 144 to 147 (TKAD), and 176 to 178 (FSS). Residues Ser39 and Thr61 each coordinate Mg(2+).

Belongs to the TRAFAC class TrmE-Era-EngA-EngB-Septin-like GTPase superfamily. EngB GTPase family. Mg(2+) serves as cofactor.

In terms of biological role, necessary for normal cell division and for the maintenance of normal septation. This Streptococcus sanguinis (strain SK36) protein is Probable GTP-binding protein EngB.